The chain runs to 814 residues: Valine--tRNA ligase (814 aa).

The 'HIGH' region motif lies at 46 to 56 (PTVSGQLHIGH). The short motif at 536–540 (KMSKS) is the 'KMSKS' region element. Lys539 is a binding site for ATP.

It belongs to the class-I aminoacyl-tRNA synthetase family. ValS type 2 subfamily. As to quaternary structure, monomer.

The protein localises to the cytoplasm. It catalyses the reaction tRNA(Val) + L-valine + ATP = L-valyl-tRNA(Val) + AMP + diphosphate. Catalyzes the attachment of valine to tRNA(Val). As ValRS can inadvertently accommodate and process structurally similar amino acids such as threonine, to avoid such errors, it has a 'posttransfer' editing activity that hydrolyzes mischarged Thr-tRNA(Val) in a tRNA-dependent manner. The chain is Valine--tRNA ligase from Rickettsia prowazekii (strain Madrid E).